Reading from the N-terminus, the 130-residue chain is MPMKPINPSQFPKPIAPYSAGAMADNVVYVSGTLALGEGGQVLHVGDAKAQTRHVLETIKTTLEAAGGGMADITFNHIFVKSWDDYKAINEVYAEYFPGDKPARYCIQCGLVKPELLVEIASIAHLSPKE.

The protein belongs to the RutC family.

The catalysed reaction is (Z)-3-aminoacrylate + H2O + H(+) = 3-oxopropanoate + NH4(+). Its function is as follows. Involved in pyrimidine catabolism. Catalyzes the deamination of 3-aminoacrylate to malonic semialdehyde, a reaction that can also occur spontaneously. RutC may facilitate the reaction and modulate the metabolic fitness, rather than catalyzing essential functions. The sequence is that of 3-aminoacrylate deaminase RutC from Haliangium ochraceum (strain DSM 14365 / JCM 11303 / SMP-2).